Here is a 132-residue protein sequence, read N- to C-terminus: Ribonuclease VapC15 (132 aa).

In terms of domain architecture, PINc spans 1–121 (MIVDTSVWIA…HRDRDYEAIR (121 aa)). Residue Asp-96 participates in Mg(2+) binding. Residues Asp-96, Asp-114, and Asp-116 each coordinate Mn(2+).

It belongs to the PINc/VapC protein family. Crystallizes as a VapB15-VapC15(2) heterotrimer and as a VapB15(2)-VapC15(2) heterotetramer; each toxin pair forms a homodimer which creates a channel in which the antitoxin binds. Mg(2+) is required as a cofactor. Requires Mn(2+) as cofactor.

Its activity is regulated as follows. RNase activity inhibited by EDTA. Toxic component of a type II toxin-antitoxin (TA) system. Degrades total E.coli RNA, which is partially inhibited by cognate antitoxin VapB15. Upon expression in M.smegmatis inhibits colony formation, which is neutralized by coexpression with VapB15. The sequence is that of Ribonuclease VapC15 from Mycobacterium tuberculosis (strain ATCC 25618 / H37Rv).